We begin with the raw amino-acid sequence, 83 residues long: MNIISNILIGLIKFYKMVISPYLTPSCRYLPTCSEYTIECLRTYGLVKAISKSTKRIFSCHPIKILGGGEGFDPVNKEFKAKK.

Belongs to the UPF0161 family.

The protein localises to the cell inner membrane. In terms of biological role, could be involved in insertion of integral membrane proteins into the membrane. The protein is Putative membrane protein insertion efficiency factor of Pelagibacter ubique (strain HTCC1062).